Here is a 433-residue protein sequence, read N- to C-terminus: MAATAHGLCEFIDASPSPFHVCATVAGRLLGAGYRELREADRWPDKPGRYFTVRAGSLVAWNAEQSGHTQVPFRIVGAHTDSPNLRVKQHPDRLVAGWHVVALQPYGGVWLHSWLDRDLGISGRLSVRDGTGVSHRLVLIDDPILRVPQLAIHLAEDRKSLTLDPQRHINAVWGVGERVESFVGYVAQRAGVAAADVLAADLMTHDLTPSALIGASVNGTASLLSAPRLDNQASCYAGMEALLAVDVDSASSGFVPVLAIFDHEEVGSASGHGAQSDLLSSVLERIVLAAGGTREDFLRRLTTSMLASADMAHATHPNYPDRHEPSHPIEVNAGPVLKVHPNLRYATDGRTAAAFALACQRAGVPMQRYEHRADLPCGSTIGPLAAARTGIPTVDVGAAQLAMHSARELMGAHDVAAYSAALQAFLSAELSEA.

Zn(2+)-binding residues include His79, His153, and His404.

Belongs to the peptidase M18 family. It depends on Zn(2+) as a cofactor.

The sequence is that of Probable M18 family aminopeptidase 2 from Mycobacterium tuberculosis (strain ATCC 25177 / H37Ra).